We begin with the raw amino-acid sequence, 114 residues long: Nucleoid-associated protein MAB_0319 (114 aa).

The protein belongs to the YbaB/EbfC family. In terms of assembly, homodimer.

The protein localises to the cytoplasm. It is found in the nucleoid. Its function is as follows. Binds to DNA and alters its conformation. May be involved in regulation of gene expression, nucleoid organization and DNA protection. The protein is Nucleoid-associated protein MAB_0319 of Mycobacteroides abscessus (strain ATCC 19977 / DSM 44196 / CCUG 20993 / CIP 104536 / JCM 13569 / NCTC 13031 / TMC 1543 / L948) (Mycobacterium abscessus).